A 213-amino-acid polypeptide reads, in one-letter code: MKNKLHRVGRCTASSSRWLYRHVNDPFVKKAKAEQYRSRAAYKLLEIDEKFNLIRKGFVVLELGSAPGGWSQVIADILNGTGRLIAVDLADMDPISGVEVVKLDIELQRKELYEYISGVELDVIVSDLAPSASGSRVTDSISSIRLAELVLHYAKNSLKKFGTVVTKILRGSEDEYRFVNSLRKQFKKIEYFKPDASRKASREIYLILLGKLS.

Positions 68, 70, 88, 104, and 127 each coordinate S-adenosyl-L-methionine. Residue K167 is the Proton acceptor of the active site.

Belongs to the class I-like SAM-binding methyltransferase superfamily. RNA methyltransferase RlmE family.

It localises to the cytoplasm. The catalysed reaction is uridine(2552) in 23S rRNA + S-adenosyl-L-methionine = 2'-O-methyluridine(2552) in 23S rRNA + S-adenosyl-L-homocysteine + H(+). Specifically methylates the uridine in position 2552 of 23S rRNA at the 2'-O position of the ribose in the fully assembled 50S ribosomal subunit. This chain is Ribosomal RNA large subunit methyltransferase E, found in Neorickettsia sennetsu (strain ATCC VR-367 / Miyayama) (Ehrlichia sennetsu).